Consider the following 153-residue polypeptide: Cytochrome c oxidase subunit 5A, mitochondrial (153 aa).

The transit peptide at methionine 1 to phenylalanine 20 directs the protein to the mitochondrion. Residues alanine 21–asparagine 88 are Mitochondrial matrix-facing. The chain crosses the membrane as a helical span at residues lysine 89–alanine 111. Topologically, residues valine 112–lysine 153 are mitochondrial intermembrane.

It belongs to the cytochrome c oxidase IV family. In terms of assembly, component of the cytochrome c oxidase (complex IV, CIV), a multisubunit enzyme composed of 12 subunits. The complex is composed of a catalytic core of 3 subunits COX1, COX2 and COX3, encoded in the mitochondrial DNA, and 9 supernumerary subunits COX4, COX5A (or COX5B), COX6, COX7, COX8, COX9, COX12, COX13 and COX26, which are encoded in the nuclear genome. COX5A is the predominant subunit V during aerobic/normoxic growth, it gets replaced by COX5B under anaerobic/hypoxic conditions. The complex exists as a monomer or a dimer and forms supercomplexes (SCs) in the inner mitochondrial membrane with a dimer of ubiquinol-cytochrome c oxidoreductase (cytochrome b-c1 complex, complex III, CIII), resulting in 2 different assemblies (supercomplexes III(2)IV and III(2)IV(2)). COX5A interacts with COR1, CYT1 and QCR6 at the CIII-CIV interface.

The protein localises to the mitochondrion inner membrane. It participates in energy metabolism; oxidative phosphorylation. Component of the cytochrome c oxidase, the last enzyme in the mitochondrial electron transport chain which drives oxidative phosphorylation. The respiratory chain contains 3 multisubunit complexes succinate dehydrogenase (complex II, CII), ubiquinol-cytochrome c oxidoreductase (cytochrome b-c1 complex, complex III, CIII) and cytochrome c oxidase (complex IV, CIV), that cooperate to transfer electrons derived from NADH and succinate to molecular oxygen, creating an electrochemical gradient over the inner membrane that drives transmembrane transport and the ATP synthase. Cytochrome c oxidase is the component of the respiratory chain that catalyzes the reduction of oxygen to water. Electrons originating from reduced cytochrome c in the intermembrane space (IMS) are transferred via the dinuclear copper A center (CU(A)) of COX2 and heme A of COX1 to the active site in COX1, a binuclear center (BNC) formed by heme A3 and copper B (CU(B)). The BNC reduces molecular oxygen to 2 water molecules using 4 electrons from cytochrome c in the IMS and 4 protons from the mitochondrial matrix. This is Cytochrome c oxidase subunit 5A, mitochondrial (COX5A) from Saccharomyces cerevisiae (strain ATCC 204508 / S288c) (Baker's yeast).